The sequence spans 110 residues: Large ribosomal subunit protein uL24 (110 aa).

This sequence belongs to the universal ribosomal protein uL24 family. Part of the 50S ribosomal subunit.

Its function is as follows. One of two assembly initiator proteins, it binds directly to the 5'-end of the 23S rRNA, where it nucleates assembly of the 50S subunit. In terms of biological role, one of the proteins that surrounds the polypeptide exit tunnel on the outside of the subunit. The sequence is that of Large ribosomal subunit protein uL24 from Desulfovibrio desulfuricans (strain ATCC 27774 / DSM 6949 / MB).